Reading from the N-terminus, the 502-residue chain is Ubiquilin (502 aa).

The 76-residue stretch at Ile8–Arg83 folds into the Ubiquitin-like domain. Residues Pro84–Pro115 show a composition bias toward low complexity. A disordered region spans residues Pro84–Arg136. STI1 domains are found at residues Ser124 to Ile157 and Asn161 to Met200. Residues Ser235–Asp251 show a composition bias toward polar residues. Residues Ser235–Ser294 form a disordered region. The span at Gln252–Gly262 shows a compositional bias: basic and acidic residues. Low complexity predominate over residues Ala274–Ala290. STI1 domains lie at Ser289–Ile327 and Asn351–Phe387. The UBA domain occupies Pro455 to Ser501.

In terms of tissue distribution, expressed in the pharynx, hypodermis, intestine and head neurons. Upon ER stress, expressed predominantly in pharyngeal muscle, hypodermis and intestine.

May play a role in the ER-associated protein degradation pathway (ERAD) possibly via its interaction with ER-localized proteins ubxn-4 and cdc-48.1 and/or cdc48.2, providing a link between the polyubiquitinated ERAD substrates and the proteasome. Also plays an important role in the regulation of other protein degradation mechanisms and pathways including ubiquitin-proteasome system (UPS) and autophagy. Mediates the proteasomal targeting of misfolded or accumulated proteins for degradation by binding (via UBA domain) to their polyubiquitin chains and by interacting (via ubiquitin-like domain) with the subunits of the proteasome. Collaborates with POST (F36D4.5) in the export of ubiquitinated proteins from the nucleus to the cytoplasm. Also acts as a regulator of DNA repair by inhibiting homologous recombination repair, thereby redirecting double-strand break repair toward non-homologous end joining (NHEJ). The sequence is that of Ubiquilin from Caenorhabditis elegans.